Consider the following 653-residue polypeptide: Macrolide export ATP-binding/permease protein MacB (653 aa).

The region spanning 6-244 (LQLTRVTRRF…DAASGASGDA (239 aa)) is the ABC transporter domain. 42 to 49 (GASGSGKS) is an ATP binding site. A run of 4 helical transmembrane segments spans residues 278 to 298 (LLTM…VAIG), 526 to 546 (LTLL…IGVM), 587 to 607 (MGGA…SLFV), and 616 to 636 (AGSI…FGFM).

The protein belongs to the ABC transporter superfamily. Macrolide exporter (TC 3.A.1.122) family. In terms of assembly, homodimer.

It localises to the cell inner membrane. In terms of biological role, non-canonical ABC transporter that contains transmembrane domains (TMD), which form a pore in the inner membrane, and an ATP-binding domain (NBD), which is responsible for energy generation. Confers resistance against macrolides. The chain is Macrolide export ATP-binding/permease protein MacB from Burkholderia thailandensis (strain ATCC 700388 / DSM 13276 / CCUG 48851 / CIP 106301 / E264).